The following is a 1014-amino-acid chain: Endogenous retrovirus group K member 10 Pol protein (1014 aa).

Residues 57–245 enclose the Reverse transcriptase domain; it reads LEKGHIEPSF…TPFHYLGMQI (189 aa). Positions 161–164 match the LPQG motif; the sequence is LPQG. Residues 195-198 carry the YXDD motif; it reads YIDD. Positions 460–590 constitute an RNase H type-1 domain; that stretch reads LENALTVFTD…ADLLVSSALI (131 aa). Asp469, Glu497, Asp517, and Asp582 together coordinate Mg(2+). An Integrase-type zinc finger spans residues 587 to 628; sequence SALIKAQELHALTHVNAAGLKNKFDVTWKQAKDIVQHCTQCQ. Zn(2+)-binding residues include His596, His600, Cys624, and Cys627. The 162-residue stretch at 642 to 803 folds into the Integrase catalytic domain; the sequence is RGLCPNALWQ…TSAEQHLTGK (162 aa). The segment at residues 811–859 is a DNA-binding region (integrase-type); sequence KLIWWKDNKNKTWEIGKVITWGRGFACVSPGENQLPVWLPTRHLKFYNE.

This sequence belongs to the beta type-B retroviral polymerase family. HERV class-II K(HML-2) pol subfamily.

The catalysed reaction is DNA(n) + a 2'-deoxyribonucleoside 5'-triphosphate = DNA(n+1) + diphosphate. The enzyme catalyses Endonucleolytic cleavage to 5'-phosphomonoester.. In terms of biological role, early post-infection, the reverse transcriptase converts the viral RNA genome into double-stranded viral DNA. The RNase H domain of the reverse transcriptase performs two functions. It degrades the RNA template and specifically removes the RNA primer from the RNA/DNA hybrid. Following nuclear import, the integrase catalyzes the insertion of the linear, double-stranded viral DNA into the host cell chromosome. Endogenous Pol proteins may have kept, lost or modified their original function during evolution. The polypeptide is Endogenous retrovirus group K member 10 Pol protein (ERVK-10) (Homo sapiens (Human)).